The following is a 384-amino-acid chain: MDRQCAVASLTAFQFQIDRQCSQTRGRACSFHTPHGIVETPRFMPVGTLATVKTVTPAQLRDTGAQMVLSNTYHLHLQPGEEIVAKAGGLHRFMNWSGPMLTDSGGFQVFSLSELRKIEERGVTFRSPRDGAVIEFTPERSIRIQNALGADVIMAFDECPPYPAERKDVEAAVARTYRWLERCINAHERPQDQALFGIVQGGVYLDLRQQAARDLVQLDLPGYAIGGVSVGEPSEEIHRIVEATAPLLPAHKPRYLMGVGTYREMVQAIAAGIDLFDCVIPTRLARHGAALVKGDRWNLKNAQFREDFQPLDEDCNCYCCQNFSRAYLNHLIRSREILGYTLLSIHNITELVRFTTRIREAILSDRFVEEFGHWLQPSAVPVSP.

Catalysis depends on Asp-103, which acts as the Proton acceptor. Residues 103–107 (DSGGF), Asp-157, Gln-200, and Gly-227 each bind substrate. Residues 258 to 264 (GVGTYRE) form an RNA binding region. Residue Asp-277 is the Nucleophile of the active site. The segment at 282–286 (TRLAR) is RNA binding; important for wobble base 34 recognition. 4 residues coordinate Zn(2+): Cys-315, Cys-317, Cys-320, and His-346.

This sequence belongs to the queuine tRNA-ribosyltransferase family. Homodimer. Within each dimer, one monomer is responsible for RNA recognition and catalysis, while the other monomer binds to the replacement base PreQ1. Requires Zn(2+) as cofactor.

It carries out the reaction 7-aminomethyl-7-carbaguanine + guanosine(34) in tRNA = 7-aminomethyl-7-carbaguanosine(34) in tRNA + guanine. Its pathway is tRNA modification; tRNA-queuosine biosynthesis. In terms of biological role, catalyzes the base-exchange of a guanine (G) residue with the queuine precursor 7-aminomethyl-7-deazaguanine (PreQ1) at position 34 (anticodon wobble position) in tRNAs with GU(N) anticodons (tRNA-Asp, -Asn, -His and -Tyr). Catalysis occurs through a double-displacement mechanism. The nucleophile active site attacks the C1' of nucleotide 34 to detach the guanine base from the RNA, forming a covalent enzyme-RNA intermediate. The proton acceptor active site deprotonates the incoming PreQ1, allowing a nucleophilic attack on the C1' of the ribose to form the product. After dissociation, two additional enzymatic reactions on the tRNA convert PreQ1 to queuine (Q), resulting in the hypermodified nucleoside queuosine (7-(((4,5-cis-dihydroxy-2-cyclopenten-1-yl)amino)methyl)-7-deazaguanosine). The polypeptide is Queuine tRNA-ribosyltransferase (Synechococcus elongatus (strain ATCC 33912 / PCC 7942 / FACHB-805) (Anacystis nidulans R2)).